A 253-amino-acid chain; its full sequence is Triosephosphate isomerase (253 aa).

Residue 9–11 (NWK) participates in substrate binding. The Electrophile role is filled by H96. E168 functions as the Proton acceptor in the catalytic mechanism. Residues G174, S213, and 234 to 235 (GG) each bind substrate.

This sequence belongs to the triosephosphate isomerase family. In terms of assembly, homodimer.

It is found in the cytoplasm. It catalyses the reaction D-glyceraldehyde 3-phosphate = dihydroxyacetone phosphate. It participates in carbohydrate biosynthesis; gluconeogenesis. Its pathway is carbohydrate degradation; glycolysis; D-glyceraldehyde 3-phosphate from glycerone phosphate: step 1/1. Its function is as follows. Involved in the gluconeogenesis. Catalyzes stereospecifically the conversion of dihydroxyacetone phosphate (DHAP) to D-glyceraldehyde-3-phosphate (G3P). This is Triosephosphate isomerase from Hydrogenovibrio crunogenus (strain DSM 25203 / XCL-2) (Thiomicrospira crunogena).